The following is a 274-amino-acid chain: 2,3,4,5-tetrahydropyridine-2,6-dicarboxylate N-succinyltransferase (274 aa).

Positions 104 and 141 each coordinate substrate.

Belongs to the transferase hexapeptide repeat family. In terms of assembly, homotrimer.

Its subcellular location is the cytoplasm. It carries out the reaction (S)-2,3,4,5-tetrahydrodipicolinate + succinyl-CoA + H2O = (S)-2-succinylamino-6-oxoheptanedioate + CoA. It participates in amino-acid biosynthesis; L-lysine biosynthesis via DAP pathway; LL-2,6-diaminopimelate from (S)-tetrahydrodipicolinate (succinylase route): step 1/3. The chain is 2,3,4,5-tetrahydropyridine-2,6-dicarboxylate N-succinyltransferase from Citrobacter koseri (strain ATCC BAA-895 / CDC 4225-83 / SGSC4696).